The following is a 422-amino-acid chain: Zinc finger and BTB domain-containing protein 42 (422 aa).

Residues 24 to 92 enclose the BTB domain; it reads CDCTVLVGDA…MYEGRLDLRS (69 aa). Disordered stretches follow at residues 121–141, 166–188, and 207–256; these read KDRS…QPPC, AALP…DQAL, and LQTP…AAKG. Positions 243 to 252 are enriched in pro residues; the sequence is HSPPKPPPVP. 4 consecutive C2H2-type zinc fingers follow at residues 294 to 316, 334 to 356, 362 to 384, and 390 to 413; these read CICP…LSAH, PTCP…ERTH, YTCV…TVVH, and HACR…RKFH.

Belongs to the krueppel C2H2-type zinc-finger protein family. ZBTB18 subfamily. As to expression, expressed in skeletal muscle (at protein level).

Its subcellular location is the cytoplasm. It localises to the nucleus. The protein localises to the nucleoplasm. In terms of biological role, transcriptional repressor. Specifically binds DNA and probably acts by recruiting chromatin remodeling multiprotein complexes. The protein is Zinc finger and BTB domain-containing protein 42 (ZBTB42) of Homo sapiens (Human).